A 522-amino-acid chain; its full sequence is Glucans biosynthesis protein G (522 aa).

The signal sequence occupies residues 1–33 (MPNNKFFVKSSKASLRWLGATVLLTLYALPSWA).

This sequence belongs to the OpgD/OpgG family.

The protein localises to the periplasm. It functions in the pathway glycan metabolism; osmoregulated periplasmic glucan (OPG) biosynthesis. In terms of biological role, involved in the biosynthesis of osmoregulated periplasmic glucans (OPGs). This is Glucans biosynthesis protein G from Sodalis glossinidius (strain morsitans).